Here is a 672-residue protein sequence, read N- to C-terminus: PHD finger protein MALE STERILITY 1 (672 aa).

The PHD-type zinc-finger motif lies at 614-664 (RIECECGATEEDGERMVCCDICEVWQHTRCVGVQHNEEVPRIFLCQSCDQH).

As to expression, in closed flower buds, especially in anthers.

The protein localises to the nucleus. Transcriptional activator required for anther and post-meiotic pollen development and maturation. Seems to regulate inflorescence branching and floral development. May control tapetal development by directly regulating tapetal programmed cell death (PCD) and breakdown. Implicated in pollen cytosolic components and wall development (e.g. exine and intine formation). This is PHD finger protein MALE STERILITY 1 (MS1) from Arabidopsis thaliana (Mouse-ear cress).